Consider the following 350-residue polypeptide: Galactokinase (350 aa).

Position 14–17 (14–17) interacts with substrate; that stretch reads EHTD. ATP-binding positions include Ser46 and 98-104; that span reads GSGLSSS. Mg(2+) is bound by residues Ser104 and Glu136. Asp148 functions as the Proton acceptor in the catalytic mechanism. Tyr197 contacts substrate.

Belongs to the GHMP kinase family. GalK subfamily.

It is found in the cytoplasm. The enzyme catalyses alpha-D-galactose + ATP = alpha-D-galactose 1-phosphate + ADP + H(+). It participates in carbohydrate metabolism; galactose metabolism. Its function is as follows. Catalyzes the transfer of the gamma-phosphate of ATP to D-galactose to form alpha-D-galactose-1-phosphate (Gal-1-P). This is Galactokinase from Thermococcus kodakarensis (strain ATCC BAA-918 / JCM 12380 / KOD1) (Pyrococcus kodakaraensis (strain KOD1)).